The following is a 55-amino-acid chain: Large ribosomal subunit protein bL33 (55 aa).

Belongs to the bacterial ribosomal protein bL33 family.

The chain is Large ribosomal subunit protein bL33 from Bordetella pertussis (strain Tohama I / ATCC BAA-589 / NCTC 13251).